The primary structure comprises 83 residues: ATP synthase subunit c (83 aa).

Helical transmembrane passes span 10–30 (IAVA…FGLL) and 52–72 (MFIV…IALF).

This sequence belongs to the ATPase C chain family. F-type ATPases have 2 components, F(1) - the catalytic core - and F(0) - the membrane proton channel. F(1) has five subunits: alpha(3), beta(3), gamma(1), delta(1), epsilon(1). F(0) has three main subunits: a(1), b(2) and c(10-14). The alpha and beta chains form an alternating ring which encloses part of the gamma chain. F(1) is attached to F(0) by a central stalk formed by the gamma and epsilon chains, while a peripheral stalk is formed by the delta and b chains.

It is found in the cell inner membrane. Its function is as follows. F(1)F(0) ATP synthase produces ATP from ADP in the presence of a proton or sodium gradient. F-type ATPases consist of two structural domains, F(1) containing the extramembraneous catalytic core and F(0) containing the membrane proton channel, linked together by a central stalk and a peripheral stalk. During catalysis, ATP synthesis in the catalytic domain of F(1) is coupled via a rotary mechanism of the central stalk subunits to proton translocation. Key component of the F(0) channel; it plays a direct role in translocation across the membrane. A homomeric c-ring of between 10-14 subunits forms the central stalk rotor element with the F(1) delta and epsilon subunits. The polypeptide is ATP synthase subunit c (Shewanella loihica (strain ATCC BAA-1088 / PV-4)).